The sequence spans 62 residues: Metallothionein (62 aa).

Methionine 1 is modified (N-acetylmethionine). The tract at residues 1-30 (MDPQDCKCETGASCSCGTTCSCSNCKCTSC) is beta. Cysteine 6, cysteine 8, cysteine 14, cysteine 16, cysteine 20, cysteine 22, cysteine 25, cysteine 27, cysteine 30, cysteine 34, cysteine 35, cysteine 37, cysteine 38, cysteine 42, cysteine 45, cysteine 49, cysteine 51, cysteine 58, cysteine 60, and cysteine 61 together coordinate a divalent metal cation. Positions 31 to 62 (KKSCCSCCPAECSKCSQGCHCEKGSKKCSCCN) are alpha.

The protein belongs to the metallothionein superfamily. Type 1 family.

In terms of biological role, metallothioneins have a high content of cysteine residues that bind various heavy metals. The protein is Metallothionein (mt-a) of Xenopus laevis (African clawed frog).